Reading from the N-terminus, the 495-residue chain is Protein BFR2 (495 aa).

Disordered stretches follow at residues 10–155 and 462–495; these read ISQL…DSSA and FNED…RIFG. Residues 23–45 are compositionally biased toward acidic residues; the sequence is IENFEDRDDGSESGGDVDYDSDL. A compositionally biased stretch (basic and acidic residues) spans 46-62; that stretch reads ATEHYVKVGKSKLRDDA. A compositionally biased stretch (acidic residues) spans 81–151; the sequence is DDEDEDGDGA…SDEELSENEN (71 aa).

This sequence belongs to the AATF family.

The protein localises to the nucleus. It is found in the nucleolus. This chain is Protein BFR2 (BFR2), found in Yarrowia lipolytica (strain CLIB 122 / E 150) (Yeast).